Here is a 421-residue protein sequence, read N- to C-terminus: Lipid II:glycine glycyltransferase (421 aa).

The protein belongs to the FemABX family. Monomer.

The protein localises to the cytoplasm. It catalyses the reaction beta-D-GlcNAc-(1-&gt;4)-Mur2Ac(oyl-L-Ala-D-isoglutaminyl-L-Lys-D-Ala-D-Ala)-di-trans,octa-cis-undecaprenyl diphosphate + glycyl-tRNA(Gly) = beta-D-GlcNAc-(1-&gt;4)-Mur2Ac(oyl-L-Ala-D-isoglutaminyl-L-Lys-(N(6)-Gly)-D-Ala-D-Ala)-di-trans,octa-cis-undecaprenyl diphosphate + tRNA(Gly) + H(+). Its function is as follows. Catalyzes the incorporation of the first glycine of the pentaglycine interpeptide bridge, which is characteristic of the S.aureus peptidoglycan. This glycine is added to the epsilon-amino group of the L-lysine of the membrane-bound lipid II intermediate (GlcNAc-(beta-1,4)-N-acetylmuramic acid(-L-Ala-D-iGln-L-Lys-D-Ala-D-Ala)-pyrophosphoryl-undecaprenol), using glycyl-tRNA(Gly) as donor, in a ribosome-independent mechanism. The protein is Lipid II:glycine glycyltransferase (femX) of Staphylococcus aureus (strain MSSA476).